The following is a 455-amino-acid chain: Retinoic acid receptor beta (455 aa).

Residues 1–87 are modulating; the sequence is MTTSSRTCPV…PLPPPRVYKP (87 aa). The tract at residues 45–78 is disordered; that stretch reads QSHPPTSGCSTPSPASVETQSTSSEELVPSPPSP. Positions 47-66 are enriched in polar residues; it reads HPPTSGCSTPSPASVETQST. NR C4-type zinc fingers lie at residues 88–108 and 124–148; these read CFVC…CEGC and CHRD…LQKC. Positions 88–153 form a DNA-binding region, nuclear receptor; it reads CFVCQDKSSG…RLQKCFEVGM (66 aa). The interval 154-182 is hinge; sequence SKESVRNDRNKKKKEPTKQESTENYEMTA. Residues 183–417 enclose the NR LBD domain; the sequence is ELDDLTEKIR…PLIQEMLENS (235 aa). Residues 416-455 form a disordered region; the sequence is NSEGHEPLTPTSNGNTAEHSPSISPSSVDNSSVSQSPMVQ. The segment covering 424–434 has biased composition (polar residues); it reads TPTSNGNTAEH. The span at 435-455 shows a compositional bias: low complexity; sequence SPSISPSSVDNSSVSQSPMVQ.

The protein belongs to the nuclear hormone receptor family. NR1 subfamily. In terms of assembly, heterodimer; with a RXR molecule. Binds DNA preferentially as a RAR/RXR heterodimer. Both isoforms expressed in heart, lung, kidney, liver, brain, lung and testis. Isoform Beta-1 is highly expressed in testes and brain. Levels increase during testes maturation. Isoform beta-2 is predominant in heart, kidney and lung.

The protein localises to the nucleus. Receptor for retinoic acid. Retinoic acid receptors bind as heterodimers to their target response elements in response to their ligands, all-trans or 9-cis retinoic acid, and regulate gene expression in various biological processes. The RAR/RXR heterodimers bind to the retinoic acid response elements (RARE) composed of tandem 5'-AGGTCA-3' sites known as DR1-DR5. May be required for Sertoli cell differentiation and spermatogenesis. The sequence is that of Retinoic acid receptor beta (RARB) from Coturnix japonica (Japanese quail).